The sequence spans 156 residues: Flagellar assembly factor FliW (156 aa).

The protein belongs to the FliW family. As to quaternary structure, interacts with translational regulator CsrA and flagellin(s).

The protein localises to the cytoplasm. Acts as an anti-CsrA protein, binds CsrA and prevents it from repressing translation of its target genes, one of which is flagellin. Binds to flagellin and participates in the assembly of the flagellum. This Lachnoclostridium phytofermentans (strain ATCC 700394 / DSM 18823 / ISDg) (Clostridium phytofermentans) protein is Flagellar assembly factor FliW.